Consider the following 37-residue polypeptide: Large ribosomal subunit protein bL36 (37 aa).

It belongs to the bacterial ribosomal protein bL36 family.

In Shewanella baltica (strain OS223), this protein is Large ribosomal subunit protein bL36.